The chain runs to 179 residues: uncharacterized protein (179 aa).

It is found in the virion. This is an uncharacterized protein from Acanthamoeba polyphaga (Amoeba).